Consider the following 294-residue polypeptide: Keratin-like protein KRT222 (294 aa).

One can recognise an IF rod domain in the interval 1–150; sequence MELSQLLNEI…RLLEQEEIRY (150 aa). Positions 1 to 151 form a coiled coil; that stretch reads MELSQLLNEI…LLEQEEIRYY (151 aa).

The protein belongs to the intermediate filament family.

The sequence is that of Keratin-like protein KRT222 (Krt222) from Mus musculus (Mouse).